Reading from the N-terminus, the 264-residue chain is Thymidylate synthase 2 (264 aa).

DUMP is bound at residue Arg-21. His-51 serves as a coordination point for (6R)-5,10-methylene-5,6,7,8-tetrahydrofolate. 126 to 127 (RR) contributes to the dUMP binding site. Cys-146 serves as the catalytic Nucleophile. DUMP contacts are provided by residues 166 to 169 (RSAD), Asn-177, and 207 to 209 (HIY). Residue Asp-169 participates in (6R)-5,10-methylene-5,6,7,8-tetrahydrofolate binding. Ser-263 is a binding site for (6R)-5,10-methylene-5,6,7,8-tetrahydrofolate.

Belongs to the thymidylate synthase family. Bacterial-type ThyA subfamily. As to quaternary structure, homodimer.

Its subcellular location is the cytoplasm. The enzyme catalyses dUMP + (6R)-5,10-methylene-5,6,7,8-tetrahydrofolate = 7,8-dihydrofolate + dTMP. The protein operates within pyrimidine metabolism; dTTP biosynthesis. Its function is as follows. Catalyzes the reductive methylation of 2'-deoxyuridine-5'-monophosphate (dUMP) to 2'-deoxythymidine-5'-monophosphate (dTMP) while utilizing 5,10-methylenetetrahydrofolate (mTHF) as the methyl donor and reductant in the reaction, yielding dihydrofolate (DHF) as a by-product. This enzymatic reaction provides an intracellular de novo source of dTMP, an essential precursor for DNA biosynthesis. The polypeptide is Thymidylate synthase 2 (Bacillus amyloliquefaciens (Bacillus velezensis)).